Here is a 246-residue protein sequence, read N- to C-terminus: MSGHILTVGLIVVVAHCATLSSSASTIPIQSQGKDFPVPFVSEQTDDFYDDKFYPDISDDNINEVVRDNGRKGGDRGRQSTPSGKESHPSATQTGGRRPSQSPCGESRPSGSATSGRRPSQSPRGESLPPATLAGRQNSRQQDRRQNKKQPDLSKYKNSPARYIFTTGNVDSGKTPDEERIFRTNRAEYVLATGGPYDNYLVEIIDGPNPNDISLKQSTTMGGDSKLILDNPNRNTIVGRIKTFKA.

The N-terminal stretch at 1–23 is a signal peptide; sequence MSGHILTVGLIVVVAHCATLSSS. A disordered region spans residues 51-160; that stretch reads DKFYPDISDD…PDLSKYKNSP (110 aa). The span at 65-78 shows a compositional bias: basic and acidic residues; that stretch reads VVRDNGRKGGDRGR. Polar residues predominate over residues 79-124; it reads QSTPSGKESHPSATQTGGRRPSQSPCGESRPSGSATSGRRPSQSPR. Over residues 141–155 the composition is skewed to basic and acidic residues; that stretch reads QQDRRQNKKQPDLSK.

As to quaternary structure, interacts with human DSG1. Interacts with human DSG3. In terms of tissue distribution, salivary gland (at protein level).

The protein localises to the secreted. In terms of biological role, down-regulates the expression of CD86 and HLA-DR on the surface of lipopolysaccharide (LPS)-stimulated human peripheral blood mononuclear cells (PBMCs). Reduces LPS-induced secretion of IL-1beta/IL1B in human PBMCs. Reduces LPS-induced secretion of various cytokines, such as IL-1beta, TNF-alpha/TNF, MCP-1/CCL2, IL6, IL27 and IL-1alpha/IL1A, in host cultured macrophages probably via inhibition of NF-kappa-B signaling pathway. Reduces production of IFN-gamma/IFNG, IL4 and IL6 in human lymphocytes activated with PMA/ionomycin. Exhibits anti-inflammatory activity in carrageenan-induced paw edema model in rats. This Phlebotomus papatasi (Sandfly) protein is Salivary antigen SP32.